The primary structure comprises 164 residues: Ecotin (164 aa).

The first 20 residues, 1 to 20, serve as a signal peptide directing secretion; it reads MKMFVPAVVFAALASASAWA. C72 and C109 are disulfide-bonded.

The protein belongs to the protease inhibitor I11 (ecotin) family. In terms of assembly, homodimer.

It localises to the periplasm. In terms of biological role, general inhibitor of pancreatic serine proteases: inhibits chymotrypsin, trypsin, elastases, factor X, kallikrein as well as a variety of other proteases. In Salmonella paratyphi A (strain ATCC 9150 / SARB42), this protein is Ecotin.